Consider the following 95-residue polypeptide: uncharacterized protein (95 aa).

Tandem repeats lie at residues 67–74 (GCGCGCGC) and 85–92 (CGGCCGCG). Residues 67-92 (GCGCGCGCATVAAVSPVPCGGCCGCG) are 2 X 8 AA approximate repeats.

This is an uncharacterized protein from Caenorhabditis elegans.